Here is a 550-residue protein sequence, read N- to C-terminus: MFCVQCEQTIRTPAGNGCSYAQGMCGKTAETSDLQDLLIAALQGLSAWAVKAREYGIINHDVDNFAPRAFFSTLTNVNFDSPRIVGYAREAIALREALKAQCLSVDANAHCDNPMADLQLVSDDLGELQRQAAEFTPNKDKAAIGENILGLRLLCLYGLKGAAAYMEHAHVLGQYDNDIYAQYHKIMAWLGTWPADMNALLECAMEIGQMNFKVMSILDAGETTKYGHPTPTQVNVKATEGKCILISGHDLKDLYNLLEQTEGTGVNVYTHGEMLPAHGYPELRKFKHLVGNYGSGWQNQQVEFARFPGPIVMTSNCIIDPTVGSYDDRIWTRSIVGWPGVSHLEGDDFGPVIAQAQQMAGFPYSEIPHLITVGFGRQTLLGAADTLIDLVSREKLRHIFLVGGCDGARGERNYFTDFATSVPDDCLILTLACGKYRFNKLEFGDIEGLPRLVDAGQCNDAYSAIILAVTLAEKLGCGVNDLPLSLVLSWFEQKAIVILLTLLSLGVKNIVTGPTAPGFFTPDLLAVLNEKFGLRSVTTVEEDMKQLLSA.

Positions 3, 6, 18, and 25 each coordinate [2Fe-2S] cluster. Residues His-249, Glu-273, Cys-317, Cys-405, Cys-433, Cys-458, Glu-492, and Lys-494 each coordinate hybrid [4Fe-2O-2S] cluster. Cys-405 bears the Cysteine persulfide mark.

The protein belongs to the HCP family. Requires [2Fe-2S] cluster as cofactor. The cofactor is hybrid [4Fe-2O-2S] cluster.

It localises to the cytoplasm. It catalyses the reaction A + NH4(+) + H2O = hydroxylamine + AH2 + H(+). Its function is as follows. Catalyzes the reduction of hydroxylamine to form NH(3) and H(2)O. The polypeptide is Hydroxylamine reductase (Salmonella enteritidis PT4 (strain P125109)).